Here is a 289-residue protein sequence, read N- to C-terminus: RNA exonuclease 4 (289 aa).

The span at 1-24 (MALSSNWQALLASESNPTSNGKNK) shows a compositional bias: polar residues. The disordered stretch occupies residues 1–34 (MALSSNWQALLASESNPTSNGKNKQSNRKIRNVK). The span at 25 to 34 (QSNRKIRNVK) shows a compositional bias: basic residues. The region spanning 121–273 (YIAMDCEFVG…EDARATMLLY (153 aa)) is the Exonuclease domain.

The protein belongs to the REXO4 family.

It localises to the nucleus. Its function is as follows. Exoribonuclease involved in ribosome biosynthesis. Involved in the processing of ITS1, the internal transcribed spacer localized between the 18S and 5.8S rRNAs. This Saccharomyces cerevisiae (strain ATCC 204508 / S288c) (Baker's yeast) protein is RNA exonuclease 4 (REX4).